The sequence spans 208 residues: Uracil phosphoribosyltransferase (208 aa).

Residues arginine 78, arginine 103, and 130–138 (DPMLATGGS) each bind 5-phospho-alpha-D-ribose 1-diphosphate. Residues isoleucine 193 and 198 to 200 (GDA) contribute to the uracil site. Aspartate 199 serves as a coordination point for 5-phospho-alpha-D-ribose 1-diphosphate.

Belongs to the UPRTase family. Mg(2+) serves as cofactor.

It catalyses the reaction UMP + diphosphate = 5-phospho-alpha-D-ribose 1-diphosphate + uracil. It participates in pyrimidine metabolism; UMP biosynthesis via salvage pathway; UMP from uracil: step 1/1. Allosterically activated by GTP. Catalyzes the conversion of uracil and 5-phospho-alpha-D-ribose 1-diphosphate (PRPP) to UMP and diphosphate. This is Uracil phosphoribosyltransferase from Blochmanniella pennsylvanica (strain BPEN).